A 340-amino-acid polypeptide reads, in one-letter code: Phenylalanine--tRNA ligase alpha subunit (340 aa).

Glu-255 is a Mg(2+) binding site.

The protein belongs to the class-II aminoacyl-tRNA synthetase family. Phe-tRNA synthetase alpha subunit type 1 subfamily. In terms of assembly, tetramer of two alpha and two beta subunits. Mg(2+) serves as cofactor.

The protein resides in the cytoplasm. The catalysed reaction is tRNA(Phe) + L-phenylalanine + ATP = L-phenylalanyl-tRNA(Phe) + AMP + diphosphate + H(+). The protein is Phenylalanine--tRNA ligase alpha subunit of Exiguobacterium sp. (strain ATCC BAA-1283 / AT1b).